The chain runs to 85 residues: Putative transmembrane protein ORF85 (85 aa).

A run of 2 helical transmembrane segments spans residues 12-32 (FPPT…KFLS) and 44-64 (LGII…GAGI).

Its subcellular location is the host membrane. This chain is Putative transmembrane protein ORF85, found in Acidianus convivator (ABV).